Here is a 184-residue protein sequence, read N- to C-terminus: Putative manganese efflux pump MntP (184 aa).

The next 6 membrane-spanning stretches (helical) occupy residues 3–23, 36–56, 65–85, 103–123, 126–146, and 163–183; these read LLSMVLIGVGLAMDAFSISVS, ALISALSFGTFQAAMPVLGWV, VSALAPWAAFILLLIIGLKMI, LLVLSIATSIDAFAVGVSFAL, ISIWLPVIVIGLITFILSLAG, and ALGGLILILIGLKILLENVSF.

The protein belongs to the MntP (TC 9.B.29) family.

It localises to the cell membrane. Functionally, probably functions as a manganese efflux pump. The sequence is that of Putative manganese efflux pump MntP from Methanothermobacter thermautotrophicus (strain ATCC 29096 / DSM 1053 / JCM 10044 / NBRC 100330 / Delta H) (Methanobacterium thermoautotrophicum).